Reading from the N-terminus, the 573-residue chain is Protein FAM227B (573 aa).

The stretch at Asp429–Arg485 forms a coiled coil. Low complexity predominate over residues Ser497–Glu521. The segment at Ser497–Glu528 is disordered.

The protein belongs to the FAM227 family.

This chain is Protein FAM227B (Fam227b), found in Rattus norvegicus (Rat).